The sequence spans 397 residues: Lipoyl synthase 2, chloroplastic (397 aa).

The N-terminal 35 residues, 1–35 (MIEQSLSKPSFSLSIPIPKAPKSKSSFFCSYSKIR), are a transit peptide targeting the chloroplast. The interval 49 to 85 (AKHPQNSTTINNGSSSSASVDLKNNEKGPYPYPGGGK) is disordered. Over residues 54–67 (NSTTINNGSSSSAS) the composition is skewed to low complexity. Positions 128, 133, 139, 159, 163, 166, and 374 each coordinate [4Fe-4S] cluster. The 222-residue stretch at 142–363 (GGGDGIATAT…KEYGESIGFR (222 aa)) folds into the Radical SAM core domain.

It belongs to the radical SAM superfamily. Lipoyl synthase family. It depends on [4Fe-4S] cluster as a cofactor.

Its subcellular location is the plastid. The protein resides in the chloroplast. The enzyme catalyses [[Fe-S] cluster scaffold protein carrying a second [4Fe-4S](2+) cluster] + N(6)-octanoyl-L-lysyl-[protein] + 2 oxidized [2Fe-2S]-[ferredoxin] + 2 S-adenosyl-L-methionine + 4 H(+) = [[Fe-S] cluster scaffold protein] + N(6)-[(R)-dihydrolipoyl]-L-lysyl-[protein] + 4 Fe(3+) + 2 hydrogen sulfide + 2 5'-deoxyadenosine + 2 L-methionine + 2 reduced [2Fe-2S]-[ferredoxin]. It functions in the pathway protein modification; protein lipoylation via endogenous pathway; protein N(6)-(lipoyl)lysine from octanoyl-[acyl-carrier-protein]: step 2/2. Its function is as follows. Catalyzes the radical-mediated insertion of two sulfur atoms into the C-6 and C-8 positions of the octanoyl moiety bound to the lipoyl domains of lipoate-dependent enzymes, thereby converting the octanoylated domains into lipoylated derivatives. This Populus trichocarpa (Western balsam poplar) protein is Lipoyl synthase 2, chloroplastic.